Reading from the N-terminus, the 582-residue chain is DNA repair and recombination protein radC (582 aa).

Residues lysine 146–arginine 150 mediate DNA binding. Residues lysine 194 to leucine 204 show a composition bias toward basic and acidic residues. Disordered regions lie at residues lysine 194–alanine 226, glutamine 310–glutamine 400, and alanine 485–histidine 582. Residues glutamine 326 to serine 335 show a composition bias toward polar residues. Residues alanine 516–alanine 529 are compositionally biased toward low complexity.

The protein belongs to the RAD52 family. In terms of assembly, part of a complex that includes RAD51, RAD52 and RAD59.

It is found in the nucleus. Involved in DNA double-strand break (DSB) repair and recombination. Promotes the annealing of complementary single-stranded DNA and by stimulation of the RAD51 recombinase. The polypeptide is DNA repair and recombination protein radC (radC) (Emericella nidulans (strain FGSC A4 / ATCC 38163 / CBS 112.46 / NRRL 194 / M139) (Aspergillus nidulans)).